The primary structure comprises 303 residues: Ribonuclease Z (303 aa).

The Zn(2+) site is built by His61, His63, Asp65, His66, His138, Asp206, and His265. Residue Asp65 is the Proton acceptor of the active site.

It belongs to the RNase Z family. In terms of assembly, homodimer. Zn(2+) serves as cofactor.

It carries out the reaction Endonucleolytic cleavage of RNA, removing extra 3' nucleotides from tRNA precursor, generating 3' termini of tRNAs. A 3'-hydroxy group is left at the tRNA terminus and a 5'-phosphoryl group is left at the trailer molecule.. Zinc phosphodiesterase, which displays some tRNA 3'-processing endonuclease activity. Probably involved in tRNA maturation, by removing a 3'-trailer from precursor tRNA. The chain is Ribonuclease Z from Agathobacter rectalis (strain ATCC 33656 / DSM 3377 / JCM 17463 / KCTC 5835 / VPI 0990) (Eubacterium rectale).